Here is a 277-residue protein sequence, read N- to C-terminus: Phosphate import ATP-binding protein PstB 1 (277 aa).

The region spanning 27–272 (LRVRDLAVSY…PSHELTAAYI (246 aa)) is the ABC transporter domain. 59 to 66 (GPSGCGKT) provides a ligand contact to ATP.

Belongs to the ABC transporter superfamily. Phosphate importer (TC 3.A.1.7) family. As to quaternary structure, the complex is composed of two ATP-binding proteins (PstB), two transmembrane proteins (PstC and PstA) and a solute-binding protein (PstS).

It localises to the cell inner membrane. The enzyme catalyses phosphate(out) + ATP + H2O = ADP + 2 phosphate(in) + H(+). In terms of biological role, part of the ABC transporter complex PstSACB involved in phosphate import. Responsible for energy coupling to the transport system. The protein is Phosphate import ATP-binding protein PstB 1 of Nitrosococcus oceani (strain ATCC 19707 / BCRC 17464 / JCM 30415 / NCIMB 11848 / C-107).